Here is a 159-residue protein sequence, read N- to C-terminus: MTKLATICYIDNGCELLLMHRNKKPNDVHEGKWISVGGKLEKGESPDECARREIFEETHLIVKQMDFKGIITFPDFTPGHDWYTYVFKVRDFEGRLISDKDSREGTLEWVPYNQVLTKPTWEGDYEIFKWILDDAPFFSAKFVYQEQKLVDKHVIFYEK.

The region spanning 1–133 is the Nudix hydrolase domain; the sequence is MTKLATICYI…DYEIFKWILD (133 aa). Mg(2+)-binding residues include G38, E53, E56, and E57. The Nudix box motif lies at 38–59; that stretch reads GKLEKGESPDECARREIFEETH.

Belongs to the Nudix hydrolase family. As to quaternary structure, homotrimer. Requires Mg(2+) as cofactor.

The catalysed reaction is 8-oxo-dGTP + H2O = 8-oxo-dGMP + diphosphate + H(+). Functionally, involved in the DNA repair system to avoid A.T to G.C transversions. Degrades 8-oxo-dGTP to the monophosphate, but is also active on all of the nucleoside triphosphates. The sequence is that of 8-oxo-dGTP diphosphatase (mutX) from Streptococcus mutans serotype c (strain ATCC 700610 / UA159).